A 177-amino-acid chain; its full sequence is Ureidoglycolate lyase (177 aa).

This sequence belongs to the ureidoglycolate lyase family. As to quaternary structure, homodimer. The cofactor is Ni(2+).

It carries out the reaction (S)-ureidoglycolate = urea + glyoxylate. Its pathway is nitrogen metabolism; (S)-allantoin degradation. Functionally, catalyzes the catabolism of the allantoin degradation intermediate (S)-ureidoglycolate, generating urea and glyoxylate. Involved in the utilization of allantoin as nitrogen source. This chain is Ureidoglycolate lyase, found in Burkholderia cepacia (Pseudomonas cepacia).